The following is a 444-amino-acid chain: Phosphoglucosamine mutase (444 aa).

S102 serves as the catalytic Phosphoserine intermediate. Positions 102, 241, 243, and 245 each coordinate Mg(2+). A Phosphoserine modification is found at S102.

This sequence belongs to the phosphohexose mutase family. It depends on Mg(2+) as a cofactor. Activated by phosphorylation.

It catalyses the reaction alpha-D-glucosamine 1-phosphate = D-glucosamine 6-phosphate. Functionally, catalyzes the conversion of glucosamine-6-phosphate to glucosamine-1-phosphate. In Glaesserella parasuis serovar 5 (strain SH0165) (Haemophilus parasuis), this protein is Phosphoglucosamine mutase.